The primary structure comprises 2664 residues: Non-reducing polyketide synthase sorB (2664 aa).

A disordered region spans residues 21 to 45; it reads KSAPQSGNTADDIPNAASQPDTTST. A compositionally biased stretch (polar residues) spans 36 to 45; sequence AASQPDTTST. Positions 112-281 are N-terminal acylcarrier protein transacylase domain (SAT); the sequence is ADHARRLAEW…TTPSRIASDL (170 aa). Cys-184 serves as the catalytic Nucleophile; for transacylase activity. His-302 functions as the Proton donor/acceptor; for transacylase activity in the catalytic mechanism. The region spanning 428–849 is the Ketosynthase family 3 (KS3) domain; sequence DNDIAVIGMS…GSNASMVIKQ (422 aa). Active-site for beta-ketoacyl synthase activity residues include Cys-596, His-731, and His-772. The segment at 961 to 1276 is malonyl-CoA:ACP transacylase (MAT) domain; that stretch reads CFGGQVSKSV…TQGTRQLADV (316 aa). The segment at 1345–1477 is N-terminal hotdog fold; the sequence is PGLYTFMGYG…GQLEFHRADD (133 aa). The PKS/mFAS DH domain maps to 1345-1663; that stretch reads PGLYTFMGYG…FSARSMSELF (319 aa). The product template (PT) domain stretch occupies residues 1376 to 1548; sequence VSGYTLGKTV…PSESAGRAVK (173 aa). A C-terminal hotdog fold region spans residues 1507–1663; sequence DEVIQGQSIY…FSARSMSELF (157 aa). The 75-residue stretch at 1711–1785 folds into the Carrier domain; sequence TELWAKLLPV…GILAFLQSTL (75 aa). Position 1745 is an O-(pantetheine 4'-phosphoryl)serine (Ser-1745). Positions 1789–1820 are disordered; it reads GEDDASQSSDAASSSRNTPPSSNDGILATPSP. The span at 1794–1803 shows a compositional bias: low complexity; it reads SQSSDAASSS. Positions 2015-2197 are methyltransferase domain; the sequence is FQLMADFLSR…DAGYKHVEWT (183 aa). Residues 2281–2526 are NADPH-binding (R) domain; that stretch reads VTGTTGSLGS…TLRSFPAVEG (246 aa).

Pantetheine 4'-phosphate is required as a cofactor.

The protein operates within secondary metabolite biosynthesis. Functionally, non-reducing polyketide synthase; part of the gene cluster that mediates the biosynthesis of sorbicillinoids, a diverse group of yellow secondary metabolites that restrict growth of competing pathogenic fungi but not of bacteria. Sorbicillinoids biosynthesis requires the action of two PKSs. SorA iteratively combines three acetyl units and the growing chain is modified by the ketoacyl reductase subunit, and optional by the enoyl reductase subunit in the second cycle. The polyketide is then handed over to the PKS SorB, which adds three more acetyl units, and two methyl groups. SorB releases an aldehyde, which undergoes spontaneous cyclization resulting in the formation of sorbicillin or 2',3'-dihydrosorbicillin. The monooxygenase sorC oxidizes sorbicillin and 2',3'-dihydrosorbicillin to 2',3'-dihydrosorbicillinol and sorbicillinol, respectively. The oxidoreductase sorD further converts sorbicillinol into oxosorbicillinol. Sorbicillinol is the building block for the other sorbicillinoids such as disorbicillinol, bisvertinolon, and dihydrobisvertinolone. The chain is Non-reducing polyketide synthase sorB from Penicillium rubens (strain ATCC 28089 / DSM 1075 / NRRL 1951 / Wisconsin 54-1255) (Penicillium chrysogenum).